The chain runs to 306 residues: Tyrosine recombinase XerC (306 aa).

The Core-binding (CB) domain maps to 6–92 (NTLYLQTKPY…ALRQWFSYLI (87 aa)). The 180-residue stretch at 113–292 (RLPKNIDAEQ…DFQHLAKIYD (180 aa)) folds into the Tyr recombinase domain. Active-site residues include arginine 152, lysine 176, histidine 244, arginine 247, and histidine 270. Tyrosine 279 (O-(3'-phospho-DNA)-tyrosine intermediate) is an active-site residue.

It belongs to the 'phage' integrase family. XerC subfamily. Forms a cyclic heterotetrameric complex composed of two molecules of XerC and two molecules of XerD.

It localises to the cytoplasm. Site-specific tyrosine recombinase, which acts by catalyzing the cutting and rejoining of the recombining DNA molecules. The XerC-XerD complex is essential to convert dimers of the bacterial chromosome into monomers to permit their segregation at cell division. It also contributes to the segregational stability of plasmids. The chain is Tyrosine recombinase XerC from Actinobacillus pleuropneumoniae serotype 7 (strain AP76).